Reading from the N-terminus, the 134-residue chain is MKVVHTVGKRRTAIARATAKEGSGKIRINKKPLELMEPKYIKMKLMEPVILAGEALSDIDVDIDVKGGGIVSQMDATRTALGKAIVEFTGKMELKEKFLSYDRTLLVSDARRTEPHKPSKSSKGPRAKRQKSYR.

The tract at residues 109 to 134 is disordered; sequence DARRTEPHKPSKSSKGPRAKRQKSYR. Basic residues predominate over residues 118–134; sequence PSKSSKGPRAKRQKSYR.

It belongs to the universal ribosomal protein uS9 family.

This Methanococcus maripaludis (strain C5 / ATCC BAA-1333) protein is Small ribosomal subunit protein uS9.